The primary structure comprises 252 residues: 5'-nucleotidase SurE (252 aa).

A divalent metal cation is bound by residues Asp8, Asp9, Ser39, and Asn91.

Belongs to the SurE nucleotidase family. A divalent metal cation is required as a cofactor.

The protein resides in the cytoplasm. It catalyses the reaction a ribonucleoside 5'-phosphate + H2O = a ribonucleoside + phosphate. Its function is as follows. Nucleotidase that shows phosphatase activity on nucleoside 5'-monophosphates. This Bordetella avium (strain 197N) protein is 5'-nucleotidase SurE.